The sequence spans 330 residues: tRNA-modifying protein YgfZ (330 aa).

2 residues coordinate folate: W28 and W190.

This sequence belongs to the tRNA-modifying YgfZ family.

It localises to the cytoplasm. In terms of biological role, folate-binding protein involved in regulating the level of ATP-DnaA and in the modification of some tRNAs. It is probably a key factor in regulatory networks that act via tRNA modification, such as initiation of chromosomal replication. The sequence is that of tRNA-modifying protein YgfZ from Yersinia enterocolitica serotype O:8 / biotype 1B (strain NCTC 13174 / 8081).